A 253-amino-acid chain; its full sequence is Vacuolar v-SNARE NYV1 (253 aa).

Residues 1 to 231 (MKRFNVSYVE…EIMWWQKVKN (231 aa)) are Cytoplasmic-facing. The interval 147–166 (LNSSGNGQSSNGNGQNTISD) is disordered. Positions 148 to 162 (NSSGNGQSSNGNGQN) are enriched in low complexity. One can recognise a v-SNARE coiled-coil homology domain in the interval 167-227 (IGDATEDQIK…VNIKEIMWWQ (61 aa)). The helical; Anchor for type IV membrane protein transmembrane segment at 232-252 (ITLLTFTIILFVSAAFMFFYL) threads the bilayer. A topological domain (vacuolar) is located at residue Trp253.

This sequence belongs to the synaptobrevin family. As to quaternary structure, present in a pentameric cis-SNARE complex composed of the v-SNAREs NYV1, VTI1 and YKT6, and the t-SNAREs VAM3 and VAM7 on vacuolar membranes. Interacts in trans with the cognate t-SNARE VAM3 during the docking step of homotypic vacuolar fusion. Interacts with the vacuolar transporter chaperone (VTC) complex and the vacuolar Ca(2+)-ATPase PMC1.

Its subcellular location is the vacuole membrane. Vacuolar v-SNARE required for docking. Only involved in homotypic vacuole fusion. Required for Ca(2+) efflux from the vacuolar lumen, a required signal for subsequent membrane fusion events, by inhibiting vacuolar Ca(2+)-ATPase PMC1 and promoting Ca(2+) release when forming trans-SNARE assemblies during the docking step. This chain is Vacuolar v-SNARE NYV1 (NYV1), found in Saccharomyces cerevisiae (strain ATCC 204508 / S288c) (Baker's yeast).